Consider the following 550-residue polypeptide: DNA gyrase subunit A (550 aa).

Residues 1–550 (FRPDRSHAKS…GMATNIPPHN (550 aa)) enclose the Topo IIA-type catalytic domain. Tyrosine 66 acts as the O-(5'-phospho-DNA)-tyrosine intermediate in catalysis. A DOD-type homing endonuclease domain is found at 192–332 (LLGAFISEGF…VQQMLLEFGV (141 aa)).

Belongs to the type II topoisomerase GyrA/ParC subunit family. As to quaternary structure, heterotetramer, composed of two GyrA and two GyrB chains. In the heterotetramer, GyrA contains the active site tyrosine that forms a transient covalent intermediate with DNA, while GyrB binds cofactors and catalyzes ATP hydrolysis. In terms of processing, this protein undergoes a protein self splicing that involves a post-translational excision of the intervening region (intein) followed by peptide ligation.

Its subcellular location is the cytoplasm. The catalysed reaction is ATP-dependent breakage, passage and rejoining of double-stranded DNA.. Functionally, a type II topoisomerase that negatively supercoils closed circular double-stranded (ds) DNA in an ATP-dependent manner to modulate DNA topology and maintain chromosomes in an underwound state. Negative supercoiling favors strand separation, and DNA replication, transcription, recombination and repair, all of which involve strand separation. Also able to catalyze the interconversion of other topological isomers of dsDNA rings, including catenanes and knotted rings. Type II topoisomerases break and join 2 DNA strands simultaneously in an ATP-dependent manner. The sequence is that of DNA gyrase subunit A (gyrA) from Mycobacterium gordonae.